We begin with the raw amino-acid sequence, 1311 residues long: Clustered mitochondria protein homolog (1311 aa).

The segment covering 1-18 (MAEKTNGAAAPNGAADAP) has biased composition (low complexity). Positions 1–27 (MAEKTNGAAAPNGAADAPKSSPEQAQD) are disordered. One can recognise a Clu domain in the interval 324-568 (DITRTQESFL…RITPLDVSWQ (245 aa)). The TPR 1 repeat unit spans residues 491–525 (IDYGAVDGKDLVATDERFVPQFQKLSKALKVKPHA). A compositionally biased stretch (basic and acidic residues) spans 606-630 (SEVAKRGQAKKDQAAVEEKKEAKAE). Disordered regions lie at residues 606–694 (SEVA…SSDR) and 925–966 (PAPV…SSTI). Residues 631-661 (SEEDSDSSSEEESSSDESDSEESSSDEDEEE) are compositionally biased toward acidic residues. Over residues 665-675 (PKKKSVPKKAA) the composition is skewed to basic residues. Positions 676–694 (KKEEVKEEKKDEKEASSDR) are enriched in basic and acidic residues. 3 TPR repeats span residues 1034–1067 (ARVY…AERT), 1076–1109 (LLDY…WKII), and 1118–1151 (ITTI…CEVV). The span at 1276 to 1286 (LKFIEGTDKQK) shows a compositional bias: basic and acidic residues. The disordered stretch occupies residues 1276–1311 (LKFIEGTDKQKKPAAKKRTGRANPKRRGAEPVSTKA). Positions 1287 to 1301 (KPAAKKRTGRANPKR) are enriched in basic residues.

It belongs to the CLU family. In terms of assembly, may associate with the eukaryotic translation initiation factor 3 (eIF-3) complex.

Its subcellular location is the cytoplasm. In terms of biological role, mRNA-binding protein involved in proper cytoplasmic distribution of mitochondria. In Pyricularia oryzae (strain 70-15 / ATCC MYA-4617 / FGSC 8958) (Rice blast fungus), this protein is Clustered mitochondria protein homolog.